Reading from the N-terminus, the 268-residue chain is 4-hydroxy-tetrahydrodipicolinate reductase (268 aa).

NAD(+) is bound by residues 7–12 (GAGGRM) and E33. NADP(+) is bound at residue R34. NAD(+) contacts are provided by residues 97-99 (GTT) and 121-124 (SGNM). The Proton donor/acceptor role is filled by H155. H156 lines the (S)-2,3,4,5-tetrahydrodipicolinate pocket. The active-site Proton donor is K159. Residue 165 to 166 (GT) participates in (S)-2,3,4,5-tetrahydrodipicolinate binding.

This sequence belongs to the DapB family.

The protein resides in the cytoplasm. The catalysed reaction is (S)-2,3,4,5-tetrahydrodipicolinate + NAD(+) + H2O = (2S,4S)-4-hydroxy-2,3,4,5-tetrahydrodipicolinate + NADH + H(+). It carries out the reaction (S)-2,3,4,5-tetrahydrodipicolinate + NADP(+) + H2O = (2S,4S)-4-hydroxy-2,3,4,5-tetrahydrodipicolinate + NADPH + H(+). Its pathway is amino-acid biosynthesis; L-lysine biosynthesis via DAP pathway; (S)-tetrahydrodipicolinate from L-aspartate: step 4/4. Its function is as follows. Catalyzes the conversion of 4-hydroxy-tetrahydrodipicolinate (HTPA) to tetrahydrodipicolinate. This chain is 4-hydroxy-tetrahydrodipicolinate reductase, found in Brucella abortus (strain 2308).